A 179-amino-acid chain; its full sequence is ATP-dependent protease subunit HslV (179 aa).

Thr7 is a catalytic residue. The Na(+) site is built by Gly162, Cys165, and Thr168.

The protein belongs to the peptidase T1B family. HslV subfamily. In terms of assembly, a double ring-shaped homohexamer of HslV is capped on each side by a ring-shaped HslU homohexamer. The assembly of the HslU/HslV complex is dependent on binding of ATP.

The protein resides in the cytoplasm. The catalysed reaction is ATP-dependent cleavage of peptide bonds with broad specificity.. With respect to regulation, allosterically activated by HslU binding. In terms of biological role, protease subunit of a proteasome-like degradation complex believed to be a general protein degrading machinery. The chain is ATP-dependent protease subunit HslV from Aromatoleum aromaticum (strain DSM 19018 / LMG 30748 / EbN1) (Azoarcus sp. (strain EbN1)).